Reading from the N-terminus, the 150-residue chain is Cytosine deaminase (150 aa).

One can recognise a CMP/dCMP-type deaminase domain in the interval 3–121 (FDDKKGLQVA…KLLIENGVEV (119 aa)). Asparagine 44 contacts substrate. Histidine 55 provides a ligand contact to Zn(2+). Glutamate 57 acts as the Proton donor in catalysis. Positions 84 and 87 each coordinate Zn(2+). Aspartate 147 is a binding site for substrate.

The protein belongs to the cytidine and deoxycytidylate deaminase family. Homodimer. Zn(2+) is required as a cofactor.

Its subcellular location is the cytoplasm. It is found in the nucleus. It carries out the reaction cytosine + H2O + H(+) = uracil + NH4(+). Its pathway is pyrimidine metabolism; UMP biosynthesis via salvage pathway; uracil from cytosine: step 1/1. Functionally, catalyzes the hydrolytic deamination of cytosine to uracil or 5-methylcytosine to thymine. Is involved in the pyrimidine salvage pathway, which allows the cell to utilize cytosine for pyrimidine nucleotide synthesis. The chain is Cytosine deaminase from Candida albicans (strain SC5314 / ATCC MYA-2876) (Yeast).